A 115-amino-acid chain; its full sequence is uncharacterized protein (115 aa).

2 helical membrane passes run 11–31 and 85–105; these read FLYL…LVWN and GYII…YALI.

To M.thermoautotrophicum MTH1706.

It localises to the cell membrane. This is an uncharacterized protein from Methanocaldococcus jannaschii (strain ATCC 43067 / DSM 2661 / JAL-1 / JCM 10045 / NBRC 100440) (Methanococcus jannaschii).